The sequence spans 312 residues: TATA box-binding protein-like 2 (312 aa).

The interval 65-115 is disordered; it reads DELSTQDEPSQVEKESKNEDSGIYTDCPQKESTQADIDTSNSAQNTSQFNL. The segment covering 75–84 has biased composition (basic and acidic residues); sequence QVEKESKNED. The span at 94 to 115 shows a compositional bias: polar residues; sequence KESTQADIDTSNSAQNTSQFNL.

The protein belongs to the TBP family. In terms of tissue distribution, in adults, expressed in the gonads, with expression much higher in the ovary than the testis (at protein level). Shows a small amount of expression in other adult organs, including the brain and kidney. Embryonic expression is mostly ubiquitous except in early gastrula embryos where expression is asymmetric.

The protein resides in the nucleus. Functionally, TATA box-binding transcription factor. Members of the TBP family are differentially required to regulate transcription and development during early embryogenesis. Commits mesoderm to the hematopoietic lineage during hemopoiesis, acting via mespa. Binds to the mespa promoter. The chain is TATA box-binding protein-like 2 from Danio rerio (Zebrafish).